The sequence spans 110 residues: MSCQQNQQQCQPPPKCPPKCTPKCPPKCPPKCPPQCPAPCSPAVSSCCGPSSGSCCGPSSGGCCSSGGGGCCLSHHRPRLFHRRRHQSPDCCESEPSGASGCCHSSGGCC.

This sequence belongs to the LCE family. Skin-specific. Expression was readily detected in adult trunk skin, adult arm skin, fetal skin, penal skin, vulva, esophagus and tongue. Not expressed in the cervix, rectum, lung, colon, or placenta.

Functionally, precursors of the cornified envelope of the stratum corneum. This is Late cornified envelope protein 2D (LCE2D) from Homo sapiens (Human).